The sequence spans 314 residues: Epithelial cell adhesion molecule (314 aa).

The signal sequence occupies residues 1-23; sequence MAPPQVLAFGLLLAAATATFAAA. Topologically, residues 24–265 are extracellular; sequence QEECVCENYK…APEFSMQGLK (242 aa). 6 cysteine pairs are disulfide-bonded: Cys-27-Cys-46, Cys-29-Cys-59, Cys-38-Cys-48, Cys-66-Cys-99, Cys-110-Cys-116, and Cys-118-Cys-135. A Thyroglobulin type-1 domain is found at 63–135; sequence AAKCLVMKAE…RTDKDTEITC (73 aa). Residue Asn-74 is glycosylated (N-linked (GlcNAc...) asparagine; partial). An N-linked (GlcNAc...) asparagine glycan is attached at Asn-111. An N-linked (GlcNAc...) asparagine glycan is attached at Asn-198. A helical membrane pass occupies residues 266 to 288; that stretch reads AGVIAVIVVVVIAVVAGIVVLVI. At 289–314 the chain is on the cytoplasmic side; the sequence is SRKKRMAKYEKAEIKEMGEMHRELNA.

This sequence belongs to the EPCAM family. Monomer. Interacts with phosphorylated CLDN7. Post-translationally, hyperglycosylated in carcinoma tissue as compared with autologous normal epithelia. Glycosylation at Asn-198 is crucial for protein stability. Highly and selectively expressed by undifferentiated rather than differentiated embryonic stem cells (ESC). Levels rapidly diminish as soon as ESC's differentiate (at protein levels). Expressed in almost all epithelial cell membranes but not on mesodermal or neural cell membranes. Found on the surface of adenocarcinoma.

The protein localises to the lateral cell membrane. It is found in the cell junction. Its subcellular location is the tight junction. In terms of biological role, may act as a physical homophilic interaction molecule between intestinal epithelial cells (IECs) and intraepithelial lymphocytes (IELs) at the mucosal epithelium for providing immunological barrier as a first line of defense against mucosal infection. Plays a role in embryonic stem cells proliferation and differentiation. Up-regulates the expression of FABP5, MYC and cyclins A and E. The sequence is that of Epithelial cell adhesion molecule (EPCAM) from Homo sapiens (Human).